A 300-amino-acid chain; its full sequence is Protein ARMCX6 (300 aa).

Over 1–6 (MGRARE) the chain is Mitochondrial intermembrane. Mitochondrion outer membrane (MOM)-targeting sequence regions lie at residues 1-6 (MGRARE) and 26-36 (KLTIGRDDSEK). Residues 7-27 (VGWMAAGLMIGAGACYCVYKL) traverse the membrane as a helical; Signal-anchor segment. Residues 28–300 (TIGRDDSEKL…REILLETPAP (273 aa)) are Cytoplasmic-facing. Disordered regions lie at residues 35–54 (EKLE…LDEE) and 69–99 (WTED…RAHP).

The protein belongs to the eutherian X-chromosome-specific Armcx family.

The protein resides in the mitochondrion. Its subcellular location is the mitochondrion outer membrane. May regulate the dynamics and distribution of mitochondria in neural cells. This chain is Protein ARMCX6 (ARMCX6), found in Homo sapiens (Human).